The sequence spans 553 residues: Flagellar hook-associated protein 1 (553 aa).

This sequence belongs to the flagella basal body rod proteins family.

It localises to the secreted. The protein resides in the bacterial flagellum. This Salmonella typhi protein is Flagellar hook-associated protein 1 (flgK).